A 433-amino-acid polypeptide reads, in one-letter code: Tol-Pal system protein TolB (433 aa).

Residues 1-21 (MINLFRGLLVVLCFASAMVSA) form the signal peptide.

The protein belongs to the TolB family. In terms of assembly, the Tol-Pal system is composed of five core proteins: the inner membrane proteins TolA, TolQ and TolR, the periplasmic protein TolB and the outer membrane protein Pal. They form a network linking the inner and outer membranes and the peptidoglycan layer.

It is found in the periplasm. Functionally, part of the Tol-Pal system, which plays a role in outer membrane invagination during cell division and is important for maintaining outer membrane integrity. The sequence is that of Tol-Pal system protein TolB from Pseudomonas syringae pv. syringae (strain B728a).